Consider the following 509-residue polypeptide: Dihydrolipoyl dehydrogenase, mitochondrial (509 aa).

The N-terminal 35 residues, 1-35, are a transit peptide targeting the mitochondrion; it reads MQSWSRVYCSLAKRGHFNRISHGLQGLSAVPLRTY. Lys66 is subject to N6-acetyllysine; alternate. Lys66 is subject to N6-succinyllysine; alternate. FAD-binding positions include 71-80 and Lys89; that span reads EKNETLGGTC. An intrachain disulfide couples Cys80 to Cys85. Residues Lys104, Lys122, Lys132, and Lys143 each carry the N6-acetyllysine; alternate modification. 4 positions are modified to N6-succinyllysine; alternate: Lys104, Lys122, Lys132, and Lys143. Gly154 lines the FAD pocket. Residues Lys159 and Lys166 each carry the N6-succinyllysine modification. 183-185 is an FAD binding site; the sequence is TGS. Residues 220-227 and Glu243 each bind NAD(+); that span reads GAGVIGVE. Residues Lys273 and Lys277 each carry the N6-succinyllysine modification. Val278 is an NAD(+) binding site. A phosphoserine mark is found at Ser285 and Ser297. Gly314 is an NAD(+) binding site. An N6-acetyllysine modification is found at Lys346. FAD contacts are provided by residues Asp355 and 361-364; that span reads MLAH. N6-acetyllysine; alternate is present on Lys410. Lys410 is subject to N6-succinyllysine; alternate. An N6-acetyllysine mark is found at Lys417 and Lys420. Lys430 carries the post-translational modification N6-succinyllysine. Residue His487 is the Proton acceptor of the active site. A Phosphoserine modification is found at Ser502. N6-acetyllysine; alternate is present on Lys505. Lys505 is modified (N6-succinyllysine; alternate).

It belongs to the class-I pyridine nucleotide-disulfide oxidoreductase family. Homodimer. Part of the multimeric pyruvate dehydrogenase complex that contains multiple copies of pyruvate dehydrogenase (subunits PDHA (PDHA1 or PDHA2) and PDHB, E1), dihydrolipoamide acetyltransferase (DLAT, E2) and lipoamide dehydrogenase (DLD, E3). These subunits are bound to an inner core composed of about 48 DLAT and 12 PDHX molecules (by non covalent bonds). The 2-oxoglutarate dehydrogenase complex is composed of OGDH (2-oxoglutarate dehydrogenase; E1), DLST (dihydrolipoamide succinyltransferase; E2), DLD (dihydrolipoamide dehydrogenase; E3) and the assembly factor KGD4. It contains multiple copies of the three enzymatic components (E1, E2 and E3). In the nucleus, the 2-oxoglutarate dehydrogenase complex associates with KAT2A. Interacts with PDHX. It depends on FAD as a cofactor. Tyrosine phosphorylated.

The protein resides in the mitochondrion matrix. It localises to the nucleus. Its subcellular location is the cell projection. The protein localises to the cilium. It is found in the flagellum. The protein resides in the cytoplasmic vesicle. It localises to the secretory vesicle. Its subcellular location is the acrosome. The catalysed reaction is N(6)-[(R)-dihydrolipoyl]-L-lysyl-[protein] + NAD(+) = N(6)-[(R)-lipoyl]-L-lysyl-[protein] + NADH + H(+). Functionally, lipoamide dehydrogenase is a component of the glycine cleavage system as well as an E3 component of three alpha-ketoacid dehydrogenase complexes (pyruvate-, alpha-ketoglutarate-, and branched-chain amino acid-dehydrogenase complex). The 2-oxoglutarate dehydrogenase complex is mainly active in the mitochondrion. A fraction of the 2-oxoglutarate dehydrogenase complex also localizes in the nucleus and is required for lysine succinylation of histones: associates with KAT2A on chromatin and provides succinyl-CoA to histone succinyltransferase KAT2A. In monomeric form may have additional moonlighting function as serine protease. Involved in the hyperactivation of spermatazoa during capacitation and in the spermatazoal acrosome reaction. The chain is Dihydrolipoyl dehydrogenase, mitochondrial (DLD) from Pongo abelii (Sumatran orangutan).